Consider the following 458-residue polypeptide: tRNA modification GTPase MnmE (458 aa).

(6S)-5-formyl-5,6,7,8-tetrahydrofolate-binding residues include Arg-26, Glu-88, and Arg-127. Positions 224-378 (GLSTAIIGRP…IEERINDIFF (155 aa)) constitute a TrmE-type G domain. Position 234 (Asn-234) interacts with K(+). Residues 234 to 239 (NVGKSS), 253 to 259 (TDIEGTT), and 278 to 281 (DTAG) contribute to the GTP site. Ser-238 contributes to the Mg(2+) binding site. Residues Thr-253, Ile-255, and Thr-258 each contribute to the K(+) site. Thr-259 lines the Mg(2+) pocket. Lys-458 contacts (6S)-5-formyl-5,6,7,8-tetrahydrofolate.

This sequence belongs to the TRAFAC class TrmE-Era-EngA-EngB-Septin-like GTPase superfamily. TrmE GTPase family. Homodimer. Heterotetramer of two MnmE and two MnmG subunits. The cofactor is K(+).

The protein resides in the cytoplasm. In terms of biological role, exhibits a very high intrinsic GTPase hydrolysis rate. Involved in the addition of a carboxymethylaminomethyl (cmnm) group at the wobble position (U34) of certain tRNAs, forming tRNA-cmnm(5)s(2)U34. In Streptococcus agalactiae serotype III (strain NEM316), this protein is tRNA modification GTPase MnmE.